Reading from the N-terminus, the 200-residue chain is Charged multivesicular body protein 6-A (200 aa).

Glycine 2 carries N-myristoyl glycine lipidation. A coiled-coil region spans residues 9 to 102 (RRSRVTEQDK…FAQIEMKVIE (94 aa)). The segment at 166–200 (EDLELPEAPSEPLPDTIPEKQAVKNKPKPQMIAAS) is disordered. The short motif at 168–179 (LELPEAPSEPLP) is the Type-2 MIT-interacting motif element.

It belongs to the SNF7 family. Probable core component of the endosomal sorting required for transport complex III (ESCRT-III). ESCRT-III components are thought to multimerize to form a flat lattice on the perimeter membrane of the endosome.

Its subcellular location is the endomembrane system. The protein localises to the late endosome membrane. Functionally, probable core component of the endosomal sorting required for transport complex III (ESCRT-III) which is involved in multivesicular bodies (MVBs) formation and sorting of endosomal cargo proteins into MVBs. MVBs contain intraluminal vesicles (ILVs) that are generated by invagination and scission from the limiting membrane of the endosome and mostly are delivered to lysosomes enabling degradation of membrane proteins, such as stimulated growth factor receptors, lysosomal enzymes and lipids. In the ESCRT-III complex, it probably serves as an acceptor for the ESCRT-II complex on endosomal membranes. This Xenopus laevis (African clawed frog) protein is Charged multivesicular body protein 6-A (chmp6-a).